Here is a 90-residue protein sequence, read N- to C-terminus: Small ribosomal subunit protein uS15c (90 aa).

Belongs to the universal ribosomal protein uS15 family. As to quaternary structure, part of the 30S ribosomal subunit.

The protein resides in the plastid. The protein localises to the chloroplast. The polypeptide is Small ribosomal subunit protein uS15c (rps15) (Nandina domestica (Heavenly bamboo)).